The chain runs to 274 residues: tRNA-cytidine(32) 2-sulfurtransferase (274 aa).

Positions 40 to 45 match the PP-loop motif motif; it reads SGGKDS. C115, C118, and C206 together coordinate [4Fe-4S] cluster.

Belongs to the TtcA family. Homodimer. Requires Mg(2+) as cofactor. [4Fe-4S] cluster serves as cofactor.

It is found in the cytoplasm. The catalysed reaction is cytidine(32) in tRNA + S-sulfanyl-L-cysteinyl-[cysteine desulfurase] + AH2 + ATP = 2-thiocytidine(32) in tRNA + L-cysteinyl-[cysteine desulfurase] + A + AMP + diphosphate + H(+). The protein operates within tRNA modification. Its function is as follows. Catalyzes the ATP-dependent 2-thiolation of cytidine in position 32 of tRNA, to form 2-thiocytidine (s(2)C32). The sulfur atoms are provided by the cysteine/cysteine desulfurase (IscS) system. In Stutzerimonas stutzeri (strain A1501) (Pseudomonas stutzeri), this protein is tRNA-cytidine(32) 2-sulfurtransferase.